The sequence spans 209 residues: Large ribosomal subunit protein uL3 (209 aa).

The segment covering 112–122 has biased composition (polar residues); sequence GTTRGHGTQGN. The interval 112–146 is disordered; the sequence is GTTRGHGTQGNIKRWGQSRGPETHGSRYHRIPGSM.

The protein belongs to the universal ribosomal protein uL3 family. Part of the 50S ribosomal subunit. Forms a cluster with proteins L14 and L19.

In terms of biological role, one of the primary rRNA binding proteins, it binds directly near the 3'-end of the 23S rRNA, where it nucleates assembly of the 50S subunit. The polypeptide is Large ribosomal subunit protein uL3 (Lactobacillus johnsonii (strain CNCM I-12250 / La1 / NCC 533)).